A 408-amino-acid polypeptide reads, in one-letter code: Cell division protein FtsZ 2 (408 aa).

GTP is bound by residues 130-132 (GTG), Glu-169, Arg-173, and Asp-216.

This sequence belongs to the FtsZ family. As to quaternary structure, homodimer. Polymerizes to form a dynamic ring structure in a strictly GTP-dependent manner. Interacts directly with several other division proteins.

It is found in the cytoplasm. Essential cell division protein that forms a contractile ring structure (Z ring) at the future cell division site. The regulation of the ring assembly controls the timing and the location of cell division. One of the functions of the FtsZ ring is to recruit other cell division proteins to the septum to produce a new cell wall between the dividing cells. Binds GTP and shows GTPase activity. This chain is Cell division protein FtsZ 2, found in Pyrococcus furiosus (strain ATCC 43587 / DSM 3638 / JCM 8422 / Vc1).